Reading from the N-terminus, the 212-residue chain is Fibrillarin-like rRNA/tRNA 2'-O-methyltransferase (212 aa).

The segment at 1–37 is disordered; the sequence is MSEPNLPAGVERREIGGETRLATRGPPVYGEPTADGW. Residues 74–75, 90–91, 115–116, and 136–139 each bind S-adenosyl-L-methionine; these read TT, EF, DA, and DVAT.

It belongs to the methyltransferase superfamily. Fibrillarin family. As to quaternary structure, interacts with nop5. Component of box C/D small ribonucleoprotein (sRNP) particles that contain rpl7ae, FlpA and nop5, plus a guide RNA.

Involved in pre-rRNA and tRNA processing. Utilizes the methyl donor S-adenosyl-L-methionine to catalyze the site-specific 2'-hydroxyl methylation of ribose moieties in rRNA and tRNA. Site specificity is provided by a guide RNA that base pairs with the substrate. Methylation occurs at a characteristic distance from the sequence involved in base pairing with the guide RNA. The polypeptide is Fibrillarin-like rRNA/tRNA 2'-O-methyltransferase (Halorubrum lacusprofundi (strain ATCC 49239 / DSM 5036 / JCM 8891 / ACAM 34)).